We begin with the raw amino-acid sequence, 238 residues long: Uridylate kinase (238 aa).

12–15 provides a ligand contact to ATP; sequence KLSG. A UMP-binding site is contributed by glycine 54. ATP is bound by residues glycine 55 and arginine 59. Residues aspartate 74 and 135 to 142 each bind UMP; that span reads TGNPFFTT. ATP-binding residues include threonine 162, asparagine 163, tyrosine 168, and aspartate 171.

Belongs to the UMP kinase family. Homohexamer.

The protein resides in the cytoplasm. It carries out the reaction UMP + ATP = UDP + ADP. The protein operates within pyrimidine metabolism; CTP biosynthesis via de novo pathway; UDP from UMP (UMPK route): step 1/1. Its activity is regulated as follows. Inhibited by UTP. In terms of biological role, catalyzes the reversible phosphorylation of UMP to UDP. This is Uridylate kinase from Rhodopseudomonas palustris (strain HaA2).